Here is a 347-residue protein sequence, read N- to C-terminus: Protein RecA (347 aa).

Residue 65–72 participates in ATP binding; that stretch reads GPESSGKT.

The protein belongs to the RecA family.

The protein resides in the cytoplasm. Its function is as follows. Can catalyze the hydrolysis of ATP in the presence of single-stranded DNA, the ATP-dependent uptake of single-stranded DNA by duplex DNA, and the ATP-dependent hybridization of homologous single-stranded DNAs. It interacts with LexA causing its activation and leading to its autocatalytic cleavage. The sequence is that of Protein RecA from Marinobacter nauticus (strain ATCC 700491 / DSM 11845 / VT8) (Marinobacter aquaeolei).